The following is a 318-amino-acid chain: Protein W (318 aa).

Disordered regions lie at residues 1-23 (MDQD…GGRE) and 38-318 (SEPT…KKGA). Residues 7–20 (ILKEDSEVEREAPG) show a composition bias toward basic and acidic residues. Polar residues predominate over residues 50–59 (LHNTINTPQG). Residue serine 68 is modified to Phosphoserine; by host. The segment covering 83 to 101 (RSGEESRVSGRTSKPEAEA) has biased composition (basic and acidic residues). Serine 125 is modified (phosphoserine; by host). A compositionally biased stretch (basic and acidic residues) spans 150–168 (GIEDENREMAAHPDKRGED). Positions 191-206 (ASNNGRSMEPGSSHSA) are enriched in polar residues. Phosphoserine; by host is present on residues serine 192, serine 249, serine 257, and serine 260.

The sequence is that of Protein W (P/V/C) from Sendai virus (strain Harris) (SeV).